Consider the following 89-residue polypeptide: Small ribosomal subunit protein uS15 (89 aa).

The protein belongs to the universal ribosomal protein uS15 family. In terms of assembly, part of the 30S ribosomal subunit. Forms a bridge to the 50S subunit in the 70S ribosome, contacting the 23S rRNA.

Its function is as follows. One of the primary rRNA binding proteins, it binds directly to 16S rRNA where it helps nucleate assembly of the platform of the 30S subunit by binding and bridging several RNA helices of the 16S rRNA. Forms an intersubunit bridge (bridge B4) with the 23S rRNA of the 50S subunit in the ribosome. The polypeptide is Small ribosomal subunit protein uS15 (Chlamydia muridarum (strain MoPn / Nigg)).